The chain runs to 96 residues: Protein RnfH (96 aa).

The protein belongs to the UPF0125 (RnfH) family.

This is Protein RnfH from Escherichia fergusonii (strain ATCC 35469 / DSM 13698 / CCUG 18766 / IAM 14443 / JCM 21226 / LMG 7866 / NBRC 102419 / NCTC 12128 / CDC 0568-73).